Consider the following 568-residue polypeptide: Peroxisomal leader peptide-processing protease (568 aa).

The tract at residues 332 to 568 (TPRGLPLRDL…PLSEVPRSKL (237 aa)) is serine protease. Residues histidine 374, aspartate 410, and serine 483 each act as charge relay system in the active site.

It belongs to the peptidase S1B family. Homodimer. Forms a heterodimer with the C-terminal cleavage product (49 kDa form). Forms a heterodimer with the N-terminal cleavage product (10 kDa form). Interacts with PEX5. Interacts with LONP2. Self-cleavage gives rise to an N-terminal 10-kDa fragment and C-terminal 49-kDa fragment upon import into the peroxisomes. The full-lengh TYSND1 is the active the proteolytic processing of PTS1- and PTS2-proteins and in self-cleavage, and intermolecular self-cleavage of TYSND1 down-regulates its protease activity.

It localises to the peroxisome. Its activity is regulated as follows. Inhibited by N-ethylmaleimide (NEM). Not affected by leupeptin or trans-epoxysuccinyl-l-leucylamido-(4-gianidino) butane (E64). Its function is as follows. Peroxisomal protease that mediates both the removal of the leader peptide from proteins containing a PTS2 target sequence and processes several PTS1-containing proteins. Catalyzes the processing of PTS1-proteins involved in the peroxisomal beta-oxidation of fatty acids. This is Peroxisomal leader peptide-processing protease (Tysnd1) from Mus musculus (Mouse).